Reading from the N-terminus, the 394-residue chain is Phosphoglycerate kinase (394 aa).

Residues 21–23 (DLN), 59–62 (HLGR), Arg-117, and Arg-150 each bind substrate. Residues Lys-201, Glu-318, and 344 to 347 (GGDT) contribute to the ATP site.

The protein belongs to the phosphoglycerate kinase family. As to quaternary structure, monomer.

It is found in the cytoplasm. The enzyme catalyses (2R)-3-phosphoglycerate + ATP = (2R)-3-phospho-glyceroyl phosphate + ADP. It participates in carbohydrate degradation; glycolysis; pyruvate from D-glyceraldehyde 3-phosphate: step 2/5. This Blochmanniella pennsylvanica (strain BPEN) protein is Phosphoglycerate kinase.